Here is a 434-residue protein sequence, read N- to C-terminus: Nuclear envelope integral membrane protein 1b (434 aa).

Residues 1–29 (MAGEVEGRGCGFSLGVLVTLLVLPLPSLC) form the signal peptide. 5 helical membrane-spanning segments follow: residues 151-171 (PRLF…DTLS), 175-195 (LFFY…ILVF), 206-226 (PFFA…QLVF), 239-259 (YLIV…YIYG), and 280-300 (LLMY…VIAF). An a; required for its colocalization with lamins at the nuclear envelope region spans residues 176 to 287 (FFYSTGITVG…GLLLMYVSVQ (112 aa)). Positions 317–325 (RKIKLKRAK) match the Nuclear localization signal motif. Positions 326-395 (PGPPRLLTEE…LTPNEVSVHE (70 aa)) are b; interaction with ran. Residues 326–434 (PGPPRLLTEE…PLYPIPRSVF (109 aa)) form an interaction with banf1-a and banf1-b region. A BAF-binding site (BBS); essential for interaction with banf1-a, banf1-b and ran region spans residues 368-375 (SRIQSPKR).

This sequence belongs to the NEMP family. Interacts with banf1-a and banf1-b. Interacts with ran-gtp. In terms of processing, phosphorylated.

It is found in the nucleus inner membrane. The protein resides in the nucleus envelope. In concert with ran, required for proper eye development. May be involved in the expression of early eye marker genes. Contributes to nuclear envelope stiffness in germ cells. Required for fertility. Essential for normal erythropoiesis. Required for efficient nuclear envelope opening and enucleation during the late stages of erythroblast maturation. This Xenopus laevis (African clawed frog) protein is Nuclear envelope integral membrane protein 1b (nemp1b).